The primary structure comprises 152 residues: Deoxyuridine 5'-triphosphate nucleotidohydrolase (152 aa).

Substrate-binding positions include 71 to 73 (RSG), Asn84, 88 to 90 (LID), and Met98.

It belongs to the dUTPase family. Homotrimer. Mg(2+) serves as cofactor.

It catalyses the reaction dUTP + H2O = dUMP + diphosphate + H(+). Its pathway is pyrimidine metabolism; dUMP biosynthesis; dUMP from dCTP (dUTP route): step 2/2. This enzyme is involved in nucleotide metabolism: it produces dUMP, the immediate precursor of thymidine nucleotides and it decreases the intracellular concentration of dUTP so that uracil cannot be incorporated into DNA. The chain is Deoxyuridine 5'-triphosphate nucleotidohydrolase from Escherichia coli O157:H7.